The following is a 199-amino-acid chain: uncharacterized protein (199 aa).

The signal sequence occupies residues 1–23 (MSARAPKELRLALPPCLLNRTFA). Asparagine 19 and asparagine 26 each carry an N-linked (GlcNAc...) asparagine glycan. Residues 24 to 60 (SHNASGGSSAGLRSSGAGGGTCITQVGQQLFQSFSST) lie on the Extracellular side of the membrane. The helical transmembrane segment at 61 to 81 (LVLIVLVTLIFCLLVLSLSTF) threads the bilayer. The Cytoplasmic segment spans residues 82 to 199 (HIHKRRMKKR…EGLLQTVVLS (118 aa)). The segment at 93–190 (MQRAQEEYER…ASSCLDTPGE (98 aa)) is disordered. Basic and acidic residues-rich tracts occupy residues 95–106 (RAQEEYERDHCS) and 124–135 (HGKETRLERQPR). Positions 147 to 163 (SSSSSSSSSPGLLCQGP) are enriched in low complexity. A compositionally biased stretch (pro residues) spans 164–176 (CAPPPPLPAPTPQ).

The protein resides in the membrane. This is an uncharacterized protein from Mus musculus (Mouse).